The chain runs to 118 residues: Ribonuclease P protein component (118 aa).

This sequence belongs to the RnpA family. As to quaternary structure, consists of a catalytic RNA component (M1 or rnpB) and a protein subunit.

The enzyme catalyses Endonucleolytic cleavage of RNA, removing 5'-extranucleotides from tRNA precursor.. In terms of biological role, RNaseP catalyzes the removal of the 5'-leader sequence from pre-tRNA to produce the mature 5'-terminus. It can also cleave other RNA substrates such as 4.5S RNA. The protein component plays an auxiliary but essential role in vivo by binding to the 5'-leader sequence and broadening the substrate specificity of the ribozyme. The polypeptide is Ribonuclease P protein component (Rickettsia typhi (strain ATCC VR-144 / Wilmington)).